The primary structure comprises 421 residues: Imidazolonepropionase (421 aa).

Positions 81 and 83 each coordinate Fe(3+). Zn(2+)-binding residues include H81 and H83. 3 residues coordinate 4-imidazolone-5-propanoate: R90, Y153, and H186. Y153 provides a ligand contact to N-formimidoyl-L-glutamate. H251 is a Fe(3+) binding site. A Zn(2+)-binding site is contributed by H251. E254 contributes to the 4-imidazolone-5-propanoate binding site. Residue D326 coordinates Fe(3+). Residue D326 coordinates Zn(2+). Positions 328 and 330 each coordinate N-formimidoyl-L-glutamate. 4-imidazolone-5-propanoate is bound at residue S331.

The protein belongs to the metallo-dependent hydrolases superfamily. HutI family. Zn(2+) serves as cofactor. Requires Fe(3+) as cofactor.

It localises to the cytoplasm. The enzyme catalyses 4-imidazolone-5-propanoate + H2O = N-formimidoyl-L-glutamate. Its pathway is amino-acid degradation; L-histidine degradation into L-glutamate; N-formimidoyl-L-glutamate from L-histidine: step 3/3. In terms of biological role, catalyzes the hydrolytic cleavage of the carbon-nitrogen bond in imidazolone-5-propanoate to yield N-formimidoyl-L-glutamate. It is the third step in the universal histidine degradation pathway. The polypeptide is Imidazolonepropionase (Streptococcus pyogenes serotype M1).